We begin with the raw amino-acid sequence, 337 residues long: Anthranilate phosphoribosyltransferase (337 aa).

5-phospho-alpha-D-ribose 1-diphosphate contacts are provided by residues Gly-82, 85-86 (GD), Thr-90, 92-95 (NIST), 110-118 (KHGNRAMSS), and Thr-122. Gly-82 lines the anthranilate pocket. Position 94 (Ser-94) interacts with Mg(2+). Asn-113 contacts anthranilate. Arg-168 is a binding site for anthranilate. Mg(2+) contacts are provided by Asp-226 and Glu-227.

This sequence belongs to the anthranilate phosphoribosyltransferase family. As to quaternary structure, homodimer. The cofactor is Mg(2+).

The catalysed reaction is N-(5-phospho-beta-D-ribosyl)anthranilate + diphosphate = 5-phospho-alpha-D-ribose 1-diphosphate + anthranilate. The protein operates within amino-acid biosynthesis; L-tryptophan biosynthesis; L-tryptophan from chorismate: step 2/5. Its function is as follows. Catalyzes the transfer of the phosphoribosyl group of 5-phosphorylribose-1-pyrophosphate (PRPP) to anthranilate to yield N-(5'-phosphoribosyl)-anthranilate (PRA). The polypeptide is Anthranilate phosphoribosyltransferase (Phenylobacterium zucineum (strain HLK1)).